The chain runs to 570 residues: Serine/threonine-protein kinase STY17 (570 aa).

The disordered stretch occupies residues 112-145 (LNGNSGDVDPSDPAVNEDAQSSYNSRSLAPPTFG). A compositionally biased stretch (polar residues) spans 129–145 (DAQSSYNSRSLAPPTFG). An ACT domain is found at 180–260 (EITFSTIDRP…PCSKQKSITF (81 aa)). A Protein kinase domain is found at 292–545 (LKIEKKVACG…EIIEMLNQLI (254 aa)). Residues 298 to 306 (VACGSYGEL) and Lys-319 each bind ATP. Asp-413 (proton acceptor) is an active-site residue. Ser-441 bears the Phosphoserine mark. The residue at position 445 (Thr-445) is a Phosphothreonine.

The protein belongs to the protein kinase superfamily. Ser/Thr protein kinase family. Autophosphorylated on serine and threonine residues. Autophosphorylated at Thr-445.

The protein resides in the cytoplasm. Its subcellular location is the cytosol. The enzyme catalyses L-seryl-[protein] + ATP = O-phospho-L-seryl-[protein] + ADP + H(+). It carries out the reaction L-threonyl-[protein] + ATP = O-phospho-L-threonyl-[protein] + ADP + H(+). Activated by autophosphorylation at Thr-445. Functionally, serine/threonine protein kinase that specifically phosphorylates chloroplast precursor proteins in the cytosol within the cleavable presequences (transit peptides). May be part of a cytosolic regulatory network involved in chloroplast protein import. Does not phosphorylate mitochondrion precursor proteins. Specific for ATP and does not utilize other NTPs. Plays a role in chloroplast biogenesis and differentiation in cotyledons, possibly through phosphorylation of chloroplast preproteins. In Arabidopsis thaliana (Mouse-ear cress), this protein is Serine/threonine-protein kinase STY17.